The primary structure comprises 387 residues: Formate-dependent phosphoribosylglycinamide formyltransferase (387 aa).

Residues 12–13 (EL) and E72 each bind N(1)-(5-phospho-beta-D-ribosyl)glycinamide. Residues R104, K145, 150–155 (SSGKGQ), 185–188 (EEFI), and E193 contribute to the ATP site. An ATP-grasp domain is found at 109–300 (DLAAKDLKLL…EFELHLRAIL (192 aa)). Mg(2+)-binding residues include E258 and E270. N(1)-(5-phospho-beta-D-ribosyl)glycinamide contacts are provided by residues D277, K348, and 355–356 (RR).

Belongs to the PurK/PurT family. Homodimer.

It carries out the reaction N(1)-(5-phospho-beta-D-ribosyl)glycinamide + formate + ATP = N(2)-formyl-N(1)-(5-phospho-beta-D-ribosyl)glycinamide + ADP + phosphate + H(+). Its pathway is purine metabolism; IMP biosynthesis via de novo pathway; N(2)-formyl-N(1)-(5-phospho-D-ribosyl)glycinamide from N(1)-(5-phospho-D-ribosyl)glycinamide (formate route): step 1/1. Functionally, involved in the de novo purine biosynthesis. Catalyzes the transfer of formate to 5-phospho-ribosyl-glycinamide (GAR), producing 5-phospho-ribosyl-N-formylglycinamide (FGAR). Formate is provided by PurU via hydrolysis of 10-formyl-tetrahydrofolate. The polypeptide is Formate-dependent phosphoribosylglycinamide formyltransferase (Leptospira interrogans serogroup Icterohaemorrhagiae serovar copenhageni (strain Fiocruz L1-130)).